Consider the following 496-residue polypeptide: Glycerol kinase (496 aa).

Residue threonine 12 coordinates ADP. ATP-binding residues include threonine 12, threonine 13, and serine 14. Residue threonine 12 participates in sn-glycerol 3-phosphate binding. An ADP-binding site is contributed by arginine 16. Sn-glycerol 3-phosphate contacts are provided by arginine 82, glutamate 83, and tyrosine 134. Residues arginine 82, glutamate 83, and tyrosine 134 each contribute to the glycerol site. Histidine 230 is modified (phosphohistidine; by HPr). Aspartate 244 is a sn-glycerol 3-phosphate binding site. Aspartate 244 and glutamine 245 together coordinate glycerol. ADP is bound by residues threonine 266 and glycine 309. 4 residues coordinate ATP: threonine 266, glycine 309, glutamine 313, and glycine 410. Residues glycine 410 and asparagine 414 each coordinate ADP.

It belongs to the FGGY kinase family. Homotetramer and homodimer (in equilibrium). In terms of processing, the phosphoenolpyruvate-dependent sugar phosphotransferase system (PTS), including enzyme I, and histidine-containing protein (HPr) are required for the phosphorylation, which leads to the activation of the enzyme.

The catalysed reaction is glycerol + ATP = sn-glycerol 3-phosphate + ADP + H(+). It functions in the pathway polyol metabolism; glycerol degradation via glycerol kinase pathway; sn-glycerol 3-phosphate from glycerol: step 1/1. Activated by phosphorylation and inhibited by fructose 1,6-bisphosphate (FBP). Functionally, key enzyme in the regulation of glycerol uptake and metabolism. Catalyzes the phosphorylation of glycerol to yield sn-glycerol 3-phosphate. In Bacillus velezensis (strain DSM 23117 / BGSC 10A6 / LMG 26770 / FZB42) (Bacillus amyloliquefaciens subsp. plantarum), this protein is Glycerol kinase.